The chain runs to 60 residues: Potassium channel toxin alpha-KTx 3.16 (60 aa).

An N-terminal signal peptide occupies residues 1–23 (MKVFSAVLIILFVCSMIIGISEG). Disulfide bonds link cysteine 30–cysteine 50, cysteine 36–cysteine 55, and cysteine 40–cysteine 57.

Belongs to the short scorpion toxin superfamily. Potassium channel inhibitor family. Alpha-KTx 03 subfamily. In terms of tissue distribution, expressed by the venom gland.

The protein localises to the secreted. Functionally, potassium channel inhibitor. This is Potassium channel toxin alpha-KTx 3.16 from Mesobuthus gibbosus (Mediterranean checkered scorpion).